The sequence spans 247 residues: MSKLFWAMLSFITRLPVPRRWSQGLDFEHYSRGIITFPLIGLLLGAISGLVFMVLQAWCGVPLAALFSVLVLALMTGGFHLDGLADTCDGVFSARSRDRMLEIMRDSRLGTHGGLALIFVVLAKILVLSELALRGEPILASLAAACAVSRGIAALLMYRHRYAREEGLGNVFIGKIDGRQTCVTLGLAAIFAAVLLPGMHGVAAMVVTMVAIFILGQLLKRTLGGQTGDTLGAAIELGELVFLLALL.

5 consecutive transmembrane segments (helical) span residues 34 to 54 (IITF…VFMV), 59 to 79 (CGVP…TGGF), 113 to 133 (GGLA…ELAL), 138 to 158 (ILAS…LLMY), and 194 to 214 (VLLP…AIFI).

Belongs to the CobS family. The cofactor is Mg(2+).

Its subcellular location is the cell inner membrane. The enzyme catalyses alpha-ribazole + adenosylcob(III)inamide-GDP = adenosylcob(III)alamin + GMP + H(+). It catalyses the reaction alpha-ribazole 5'-phosphate + adenosylcob(III)inamide-GDP = adenosylcob(III)alamin 5'-phosphate + GMP + H(+). It functions in the pathway cofactor biosynthesis; adenosylcobalamin biosynthesis; adenosylcobalamin from cob(II)yrinate a,c-diamide: step 7/7. Joins adenosylcobinamide-GDP and alpha-ribazole to generate adenosylcobalamin (Ado-cobalamin). Also synthesizes adenosylcobalamin 5'-phosphate from adenosylcobinamide-GDP and alpha-ribazole 5'-phosphate. The chain is Adenosylcobinamide-GDP ribazoletransferase from Shigella dysenteriae serotype 1 (strain Sd197).